Here is a 122-residue protein sequence, read N- to C-terminus: Cofilin/actin-depolymerizing factor homolog 1 (122 aa).

In terms of domain architecture, ADF-H spans 4–122 (GIRVNDNCVT…ESAQDVADLK (119 aa)).

The protein belongs to the actin-binding proteins ADF family. As to quaternary structure, interacts with monomeric actin, does not bind to actin polymers.

The protein resides in the cytoplasm. It is found in the cytoskeleton. In terms of biological role, not involved in actin polymerisation, instead functions to stimulate nucleotide exchange on monomeric actin and influence turnover of the small amount of cytosolic actin microfilaments. Essential for erythrocytic schizogony. This Plasmodium falciparum (isolate 3D7) protein is Cofilin/actin-depolymerizing factor homolog 1.